We begin with the raw amino-acid sequence, 235 residues long: Elongation factor Tu (235 aa).

Positions 1–125 (KNMITGAAQM…EVDEYIPTPE (125 aa)) constitute a tr-type G domain. A GTP-binding site is contributed by 47–50 (NKED).

This sequence belongs to the TRAFAC class translation factor GTPase superfamily. Classic translation factor GTPase family. EF-Tu/EF-1A subfamily. Monomer.

Its subcellular location is the cytoplasm. The catalysed reaction is GTP + H2O = GDP + phosphate + H(+). Its function is as follows. GTP hydrolase that promotes the GTP-dependent binding of aminoacyl-tRNA to the A-site of ribosomes during protein biosynthesis. The polypeptide is Elongation factor Tu (tufA) (Gloeothece membranacea (strain PCC 6501 / SAG 26.84)).